The chain runs to 249 residues: Probable transcriptional regulatory protein Minf_0651 (249 aa).

It belongs to the TACO1 family.

The protein localises to the cytoplasm. In Methylacidiphilum infernorum (isolate V4) (Methylokorus infernorum (strain V4)), this protein is Probable transcriptional regulatory protein Minf_0651.